The primary structure comprises 121 residues: Large ribosomal subunit protein uL18 (121 aa).

The protein belongs to the universal ribosomal protein uL18 family. Part of the 50S ribosomal subunit; part of the 5S rRNA/L5/L18/L25 subcomplex. Contacts the 5S and 23S rRNAs.

Its function is as follows. This is one of the proteins that bind and probably mediate the attachment of the 5S RNA into the large ribosomal subunit, where it forms part of the central protuberance. The polypeptide is Large ribosomal subunit protein uL18 (Mesomycoplasma hyopneumoniae (strain J / ATCC 25934 / NCTC 10110) (Mycoplasma hyopneumoniae)).